The primary structure comprises 260 residues: Indole-3-glycerol phosphate synthase (260 aa).

Belongs to the TrpC family.

The catalysed reaction is 1-(2-carboxyphenylamino)-1-deoxy-D-ribulose 5-phosphate + H(+) = (1S,2R)-1-C-(indol-3-yl)glycerol 3-phosphate + CO2 + H2O. Its pathway is amino-acid biosynthesis; L-tryptophan biosynthesis; L-tryptophan from chorismate: step 4/5. The polypeptide is Indole-3-glycerol phosphate synthase (Thermoanaerobacter sp. (strain X514)).